Consider the following 420-residue polypeptide: Putative competence-damage inducible protein (420 aa).

Belongs to the CinA family.

In Lactiplantibacillus plantarum (strain ATCC BAA-793 / NCIMB 8826 / WCFS1) (Lactobacillus plantarum), this protein is Putative competence-damage inducible protein.